A 207-amino-acid chain; its full sequence is Probable GTP-binding protein EngB (207 aa).

Positions 22-194 constitute an EngB-type G domain; sequence DLPEVAFAGR…LQRLDVALSD (173 aa). GTP-binding positions include 30 to 37, 57 to 61, 75 to 78, 142 to 145, and 173 to 175; these read GRSNVGKS, GRTQL, DLPG, TKVD, and FSA. Mg(2+) is bound by residues Ser-37 and Thr-59.

Belongs to the TRAFAC class TrmE-Era-EngA-EngB-Septin-like GTPase superfamily. EngB GTPase family. Requires Mg(2+) as cofactor.

Necessary for normal cell division and for the maintenance of normal septation. The chain is Probable GTP-binding protein EngB from Syntrophotalea carbinolica (strain DSM 2380 / NBRC 103641 / GraBd1) (Pelobacter carbinolicus).